We begin with the raw amino-acid sequence, 505 residues long: Maturase K (505 aa).

Belongs to the intron maturase 2 family. MatK subfamily.

It is found in the plastid. It localises to the chloroplast. In terms of biological role, usually encoded in the trnK tRNA gene intron. Probably assists in splicing its own and other chloroplast group II introns. In Silene otites (Spanish catchfly), this protein is Maturase K.